We begin with the raw amino-acid sequence, 300 residues long: Acetylglutamate kinase (300 aa).

Substrate contacts are provided by residues G73–G74, R95, and N197.

It belongs to the acetylglutamate kinase family. ArgB subfamily.

The protein resides in the cytoplasm. It catalyses the reaction N-acetyl-L-glutamate + ATP = N-acetyl-L-glutamyl 5-phosphate + ADP. It functions in the pathway amino-acid biosynthesis; L-arginine biosynthesis; N(2)-acetyl-L-ornithine from L-glutamate: step 2/4. Its function is as follows. Catalyzes the ATP-dependent phosphorylation of N-acetyl-L-glutamate. The protein is Acetylglutamate kinase of Polynucleobacter necessarius subsp. necessarius (strain STIR1).